The primary structure comprises 228 residues: MRIRRRDEKENQEYKKGLWTVEEDNILMDYVLNHGTGQWNRIVRKTGLKRCGKSCRLRWMNYLSPNVNKGNFTEQEEDLIIRLHKLLGNRWSLIAKRVPGRTDNQVKNYWNTHLSKKLVGDYSSAVKTTGEDDDSPPSLFITAATPSSCHHQQENIYENIAKSFNGVVSASYEDKPKQELAQKDVLMATTNDPSHYYGNNALWVHDDDFELSSLVMMNFASGDVEYCL.

2 consecutive HTH myb-type domains span residues 11–63 (NQEY…MNYL) and 64–118 (SPNV…SKKL). 2 consecutive DNA-binding regions (H-T-H motif) follow at residues 39–63 (WNRI…MNYL) and 91–114 (WSLI…NTHL).

As to quaternary structure, homodimer and heterodimer with MYB82. Interacts directly with GL3 and BHLH2. Part of a complex made of GL1, GL3 or BHLH2, and TTG1. Also interacts with BHLH2/EGL3/MYC146 and BHLH12/MYC1. Interacts with MYB82. As to expression, expressed in leaves, stems and flowers. Expressed in trichome cells and in leaf primordia.

The protein resides in the nucleus. In terms of biological role, transcription activator, when associated with BHLH2/EGL3/MYC146 or BHLH12/MYC1. Involved in epidermal cell fate specification in leaves. Together with TTG1 and GL3, promotes trichome formation and endoreplication. Regulates the production of a signal that induces hair (trichome) precursor cells on leaf primordia to differentiate. Binds to the WER-binding sites (WBS) promoter regions and activates the transcription of target genes. In Arabidopsis thaliana (Mouse-ear cress), this protein is Trichome differentiation protein GL1.